The chain runs to 569 residues: Acyl-CoA transferase FVEG_12629 (569 aa).

This sequence belongs to the CoA-transferase III family.

In terms of biological role, acyl-CoA transferase; part of the Fusarium detoxification of benzoxazolinone cluster 2 (FDB2) involved in the degradation of benzoxazolinones produced by the host plant. Maize, wheat, and rye produce the 2 benzoxazinone phytoanticipins 2,4-dihy-droxy-7-methoxy-1,4-benzoxazin-3-one (DIMBOA) and 2,4-dihydroxy-1,4-benzoxazin-3-one (DIBOA) that, due to their inherent instability once released, spontaneously degrade to the more stable corresponding benzoxazolinones, 6-methoxy-2-benzoxazolinone (MBOA) and 2-benzoxazolinone (BOA), respectively. The first step in the detoxification of benzoxazolinones involves the hydrolysis of the cyclic ester bond of benzoxazolinones by the FDB1 cluster gamma-lactamase MBL1 to aminophenols. MBL1 is able to convert BOA into 2-aminophenol (2-AP), as well as MBOA into 5-methoxy-2-aminophenol (2-AMP). The FDB2 cluster N-malonyltransferase FDB2/NAT1 then metabolizes aminophenols via N-malonylation to non-toxic malonamic acids. FDB2/NAT1 converts 2-AP into N-(2-hydroxyphenyl) malonamic acid (HPMA) and 2-AMP into N-(2-hydroxy-4-methoxyphenyl) malonamic acid (HMPMA). The duplicated dienlactone hydrolases DLH1 and DLH2 may provide redundant function for hydrolyzing the lactone moiety in the BOA molecule. The roles of the amidases an other enzymes encoded by the 2 FDB clusters have not been identified so far. This is Acyl-CoA transferase FVEG_12629 from Gibberella moniliformis (strain M3125 / FGSC 7600) (Maize ear and stalk rot fungus).